The primary structure comprises 288 residues: Acetyl-coenzyme A carboxylase carboxyl transferase subunit beta (288 aa).

A CoA carboxyltransferase N-terminal domain is found at 32–288 (LFAKCPACKH…LELHTEVENV (257 aa)). The Zn(2+) site is built by Cys36, Cys39, Cys54, and Cys57. The segment at 36-57 (CPACKHTIYQKDLGKNKVCPNC) adopts a C4-type zinc-finger fold.

Belongs to the AccD/PCCB family. As to quaternary structure, acetyl-CoA carboxylase is a heterohexamer composed of biotin carboxyl carrier protein (AccB), biotin carboxylase (AccC) and two subunits each of ACCase subunit alpha (AccA) and ACCase subunit beta (AccD). It depends on Zn(2+) as a cofactor.

It localises to the cytoplasm. It catalyses the reaction N(6)-carboxybiotinyl-L-lysyl-[protein] + acetyl-CoA = N(6)-biotinyl-L-lysyl-[protein] + malonyl-CoA. It functions in the pathway lipid metabolism; malonyl-CoA biosynthesis; malonyl-CoA from acetyl-CoA: step 1/1. Its function is as follows. Component of the acetyl coenzyme A carboxylase (ACC) complex. Biotin carboxylase (BC) catalyzes the carboxylation of biotin on its carrier protein (BCCP) and then the CO(2) group is transferred by the transcarboxylase to acetyl-CoA to form malonyl-CoA. This Lactococcus lactis subsp. lactis (strain IL1403) (Streptococcus lactis) protein is Acetyl-coenzyme A carboxylase carboxyl transferase subunit beta.